A 113-amino-acid polypeptide reads, in one-letter code: T cell receptor alpha variable 13-2 (113 aa).

The signal sequence occupies residues 1–21; sequence MAGIRALFMYLWLQLDWVSRG. The region spanning 22-113 is the Ig-like domain; it reads ESVGLHLPTL…DSAVYFCAEN (92 aa). Cysteines 43 and 110 form a disulfide. Asn-87 carries N-linked (GlcNAc...) asparagine glycosylation.

In terms of assembly, alpha-beta TR is a heterodimer composed of an alpha and beta chain; disulfide-linked. The alpha-beta TR is associated with the transmembrane signaling CD3 coreceptor proteins to form the TR-CD3 (TcR or TCR). The assembly of alpha-beta TR heterodimers with CD3 occurs in the endoplasmic reticulum where a single alpha-beta TR heterodimer associates with one CD3D-CD3E heterodimer, one CD3G-CD3E heterodimer and one CD247 homodimer forming a stable octameric structure. CD3D-CD3E and CD3G-CD3E heterodimers preferentially associate with TR alpha and TR beta chains, respectively. The association of the CD247 homodimer is the last step of TcR assembly in the endoplasmic reticulum and is required for transport to the cell surface.

The protein resides in the cell membrane. Functionally, v region of the variable domain of T cell receptor (TR) alpha chain that participates in the antigen recognition. Alpha-beta T cell receptors are antigen specific receptors which are essential to the immune response and are present on the cell surface of T lymphocytes. Recognize peptide-major histocompatibility (MH) (pMH) complexes that are displayed by antigen presenting cells (APC), a prerequisite for efficient T cell adaptive immunity against pathogens. Binding of alpha-beta TR to pMH complex initiates TR-CD3 clustering on the cell surface and intracellular activation of LCK that phosphorylates the ITAM motifs of CD3G, CD3D, CD3E and CD247 enabling the recruitment of ZAP70. In turn ZAP70 phosphorylates LAT, which recruits numerous signaling molecules to form the LAT signalosome. The LAT signalosome propagates signal branching to three major signaling pathways, the calcium, the mitogen-activated protein kinase (MAPK) kinase and the nuclear factor NF-kappa-B (NF-kB) pathways, leading to the mobilization of transcription factors that are critical for gene expression and essential for T cell growth and differentiation. The T cell repertoire is generated in the thymus, by V-(D)-J rearrangement. This repertoire is then shaped by intrathymic selection events to generate a peripheral T cell pool of self-MH restricted, non-autoaggressive T cells. Post-thymic interaction of alpha-beta TR with the pMH complexes shapes TR structural and functional avidity. The chain is T cell receptor alpha variable 13-2 from Homo sapiens (Human).